A 192-amino-acid chain; its full sequence is dTDP-3-amino-3,6-dideoxy-alpha-D-galactopyranose 3-N-acetyltransferase (192 aa).

Belongs to the transferase hexapeptide repeat family.

The enzyme catalyses dTDP-3-amino-3,6-dideoxy-alpha-D-galactopyranose + acetyl-CoA = dTDP-3-acetamido-3,6-dideoxy-alpha-D-galactopyranose + CoA + H(+). Catalyzes the transfer of an acetyl group to dTDP-D-Fucp3N to form dTDP-D-Fucp3NAc in the biosynthesis of dTDP-3-acetamido-3,6-dideoxy-alpha-D-galactose, a glycan chain of the S-layer. The sequence is that of dTDP-3-amino-3,6-dideoxy-alpha-D-galactopyranose 3-N-acetyltransferase (fdtC) from Aneurinibacillus thermoaerophilus.